Here is a 145-residue protein sequence, read N- to C-terminus: D-aminoacyl-tRNA deacylase (145 aa).

The Gly-cisPro motif, important for rejection of L-amino acids signature appears at 137-138 (GP).

It belongs to the DTD family. Homodimer.

The protein localises to the cytoplasm. The catalysed reaction is glycyl-tRNA(Ala) + H2O = tRNA(Ala) + glycine + H(+). It carries out the reaction a D-aminoacyl-tRNA + H2O = a tRNA + a D-alpha-amino acid + H(+). In terms of biological role, an aminoacyl-tRNA editing enzyme that deacylates mischarged D-aminoacyl-tRNAs. Also deacylates mischarged glycyl-tRNA(Ala), protecting cells against glycine mischarging by AlaRS. Acts via tRNA-based rather than protein-based catalysis; rejects L-amino acids rather than detecting D-amino acids in the active site. By recycling D-aminoacyl-tRNA to D-amino acids and free tRNA molecules, this enzyme counteracts the toxicity associated with the formation of D-aminoacyl-tRNA entities in vivo and helps enforce protein L-homochirality. This chain is D-aminoacyl-tRNA deacylase, found in Ruegeria pomeroyi (strain ATCC 700808 / DSM 15171 / DSS-3) (Silicibacter pomeroyi).